Here is a 290-residue protein sequence, read N- to C-terminus: uncharacterized protein (290 aa).

Disordered regions lie at residues 17–91 (QTIS…EKNS) and 220–259 (DKASEPINGEEKEEGEKDGNAEQGKQKEVQDEQEEVQMPN). The span at 40-50 (NITTHLSTGNL) shows a compositional bias: polar residues. Residues 66-83 (STKKGKRVSKPGTKKKEK) are compositionally biased toward basic residues. The span at 233–249 (EGEKDGNAEQGKQKEVQ) shows a compositional bias: basic and acidic residues.

This is an uncharacterized protein from Saccharomyces cerevisiae (strain ATCC 204508 / S288c) (Baker's yeast).